Consider the following 1083-residue polypeptide: Chitin synthase 2 (1083 aa).

Composition is skewed to basic and acidic residues over residues 1-10 (MSSEREERTF) and 18-30 (DDVR…ENQE). Disordered regions lie at residues 1-248 (MSSE…IADD) and 260-294 (DDDV…TLNE). An N-linked (GlcNAc...) asparagine glycan is attached at Asn-23. 2 stretches are compositionally biased toward polar residues: residues 38–49 (SYASSMAESQTL) and 61–70 (AKLQNKNRTS). N-linked (GlcNAc...) asparagine glycosylation is present at Asn-67. Basic and acidic residues-rich tracts occupy residues 78-100 (LPRD…KEQQ) and 117-128 (RLRDVNSHDKLP). Polar residues-rich tracts occupy residues 132-148 (SPRN…SRSG), 177-191 (RPWT…FTRS), and 282-292 (SYMSSESQDTL). A glycan (N-linked (GlcNAc...) asparagine) is linked at Asn-417. 8 helical membrane passes run 708-728 (WLNG…QIWF), 747-767 (FIQL…FYFV), 785-805 (TVIF…QFIL), 820-840 (ISMI…FYII), 860-880 (NMIV…ILYL), 889-909 (SAQY…YAFC), 987-1007 (YLVL…SEIY), and 1020-1040 (FLLW…TTFA).

It belongs to the chitin synthase family. Class II subfamily.

It localises to the cell membrane. It carries out the reaction [(1-&gt;4)-N-acetyl-beta-D-glucosaminyl](n) + UDP-N-acetyl-alpha-D-glucosamine = [(1-&gt;4)-N-acetyl-beta-D-glucosaminyl](n+1) + UDP + H(+). Polymerizes chitin, a structural polymer of the cell wall and septum, by transferring the sugar moiety of UDP-GlcNAc to the non-reducing end of the growing chitin polymer. Plays a critical role in cell wall integrity and virulence. The protein is Chitin synthase 2 of Fusarium oxysporum f. sp. lycopersici (strain 4287 / CBS 123668 / FGSC 9935 / NRRL 34936) (Fusarium vascular wilt of tomato).